The primary structure comprises 325 residues: Ribose-phosphate pyrophosphokinase (325 aa).

ATP is bound by residues 45 to 47 (NGE) and 104 to 105 (RQ). Residues histidine 138 and aspartate 178 each coordinate Mg(2+). Lysine 202 is a catalytic residue. D-ribose 5-phosphate is bound by residues arginine 204, aspartate 230, and 234-238 (DTGGT).

This sequence belongs to the ribose-phosphate pyrophosphokinase family. Class I subfamily. In terms of assembly, homohexamer. Mg(2+) serves as cofactor.

The protein localises to the cytoplasm. The catalysed reaction is D-ribose 5-phosphate + ATP = 5-phospho-alpha-D-ribose 1-diphosphate + AMP + H(+). The protein operates within metabolic intermediate biosynthesis; 5-phospho-alpha-D-ribose 1-diphosphate biosynthesis; 5-phospho-alpha-D-ribose 1-diphosphate from D-ribose 5-phosphate (route I): step 1/1. Functionally, involved in the biosynthesis of the central metabolite phospho-alpha-D-ribosyl-1-pyrophosphate (PRPP) via the transfer of pyrophosphoryl group from ATP to 1-hydroxyl of ribose-5-phosphate (Rib-5-P). The sequence is that of Ribose-phosphate pyrophosphokinase from Corynebacterium efficiens (strain DSM 44549 / YS-314 / AJ 12310 / JCM 11189 / NBRC 100395).